The primary structure comprises 873 residues: MSSRSSKYMYKSSGGAGDISIEYGTDLGALTRLEDKLRLLQEDLESERELRQRIEREKSDLTVQLMQLSDRLEEAEGSSETVVEMNKKRDTELSKLRKLLEDVHLESEETAHHLRKKHQEAVAEMQEQMDLMTKAKSKAEKERQKFQAEVYELLAQVENTNKEKITIQKTVEKLEHTVYELNIRIEELNRTVTEVTAQRTRLSAENAEYLKEVHELKVSLDNVNHLKSQLATQLEDTRRRLEDEERKRASLESSMHTLEVEIESLKVQLEEESEARLEVERQLVKANADAAAYKTKYETEVQAHADEVEELRRKMAQKISEYEEQLEALLTRCSNLEKQKSRLQSEVEVLIMDLEKATAHAQNLEKRVAQLEKLNIDLKSKVEELTILLEQSQRELRQKVAEIQKLQHEYEKMREQRDALQRENKKLVDDLSEAKSQLADAIRRLHEYELEIKRLENERDELAAAYKEAETLRKQEEAKCQRLTAELAQVRHEYERRLQIKEEEIEALRKQYQLEVEQLNMRLAEAEAKLKTEIARIKKKYQAQITELEMSLDAANKQNMDLQKIIKKQAIQITELQAHYDEVHRQLQQCADQLAISQRRCQGLQAELDEQRVALESALRSKRAAEQSLEESQARVNELTTINVNIAAAKNKLESELSALQADYDELHKELRVVDERCQRTIVELKSTKDILVEEQERYIKVESIKKSLEVEVRNLQVRLEEVEANALAGGKRVIAKLEARIRDVEIELEEEKKRHAETQKILRKKDHRAKELLLQTEEDHKTITMLNDAVEKLNEKVKVYKRQLNEQEGLSQQNLTRVRRFQRELEAAEDRADSAESNLSLIRAKHRSWVTTSQVPGGTRQVFVTEESSQNF.

The segment at 1 to 25 (MSSRSSKYMYKSSGGAGDISIEYGT) is nonhelical region. The stretch at 26–852 (DLGALTRLED…IRAKHRSWVT (827 aa)) forms a coiled coil. A nonhelical region region spans residues 853–873 (TSQVPGGTRQVFVTEESSQNF).

This sequence belongs to the paramyosin family. In terms of assembly, homodimer. Binds IgG and collagen. As to expression, expressed in all tissues except in saliva.

Its subcellular location is the cytoplasm. The protein resides in the myofibril. Paramyosin is a major structural component of many thick filaments isolated from invertebrate muscles. The sequence is that of Paramyosin (PRM) from Rhipicephalus microplus (Cattle tick).